The chain runs to 462 residues: Argininosuccinate lyase (462 aa).

This sequence belongs to the lyase 1 family. Argininosuccinate lyase subfamily.

It localises to the cytoplasm. It catalyses the reaction 2-(N(omega)-L-arginino)succinate = fumarate + L-arginine. It functions in the pathway amino-acid biosynthesis; L-arginine biosynthesis; L-arginine from L-ornithine and carbamoyl phosphate: step 3/3. The sequence is that of Argininosuccinate lyase from Dechloromonas aromatica (strain RCB).